We begin with the raw amino-acid sequence, 125 residues long: Ribonuclease P protein component (125 aa).

This sequence belongs to the RnpA family. In terms of assembly, consists of a catalytic RNA component (M1 or rnpB) and a protein subunit.

It carries out the reaction Endonucleolytic cleavage of RNA, removing 5'-extranucleotides from tRNA precursor.. In terms of biological role, RNaseP catalyzes the removal of the 5'-leader sequence from pre-tRNA to produce the mature 5'-terminus. It can also cleave other RNA substrates such as 4.5S RNA. The protein component plays an auxiliary but essential role in vivo by binding to the 5'-leader sequence and broadening the substrate specificity of the ribozyme. The protein is Ribonuclease P protein component of Idiomarina loihiensis (strain ATCC BAA-735 / DSM 15497 / L2-TR).